The primary structure comprises 336 residues: Retinol dehydrogenase 10-B (336 aa).

A helical; Signal-anchor transmembrane segment spans residues 7 to 27; the sequence is LFVVTFKIIWSFVLAGAKWFI. 40 to 64 contributes to the NADP(+) binding site; the sequence is VITGAGSGLGRLFALEFARRRATLV. Position 192 (serine 192) interacts with substrate. The active-site Proton acceptor is tyrosine 205.

It belongs to the short-chain dehydrogenases/reductases (SDR) family.

The protein localises to the microsome membrane. Its subcellular location is the endoplasmic reticulum membrane. The catalysed reaction is all-trans-retinol + NADP(+) = all-trans-retinal + NADPH + H(+). It participates in cofactor metabolism; retinol metabolism. Retinol dehydrogenase with a clear preference for NADP. Converts all-trans-retinol to all-trans-retinal. Has no detectable activity towards 11-cis-retinol, 9-cis-retinol and 13-cis-retinol. The chain is Retinol dehydrogenase 10-B (rdh10b) from Danio rerio (Zebrafish).